The chain runs to 251 residues: Ubiquinone/menaquinone biosynthesis C-methyltransferase UbiE (251 aa).

S-adenosyl-L-methionine-binding positions include Thr-74, Asp-95, 123-124, and Ser-140; that span reads NA.

Belongs to the class I-like SAM-binding methyltransferase superfamily. MenG/UbiE family.

It catalyses the reaction a 2-demethylmenaquinol + S-adenosyl-L-methionine = a menaquinol + S-adenosyl-L-homocysteine + H(+). It carries out the reaction a 2-methoxy-6-(all-trans-polyprenyl)benzene-1,4-diol + S-adenosyl-L-methionine = a 5-methoxy-2-methyl-3-(all-trans-polyprenyl)benzene-1,4-diol + S-adenosyl-L-homocysteine + H(+). It participates in quinol/quinone metabolism; menaquinone biosynthesis; menaquinol from 1,4-dihydroxy-2-naphthoate: step 2/2. It functions in the pathway cofactor biosynthesis; ubiquinone biosynthesis. In terms of biological role, methyltransferase required for the conversion of demethylmenaquinol (DMKH2) to menaquinol (MKH2) and the conversion of 2-polyprenyl-6-methoxy-1,4-benzoquinol (DDMQH2) to 2-polyprenyl-3-methyl-6-methoxy-1,4-benzoquinol (DMQH2). The protein is Ubiquinone/menaquinone biosynthesis C-methyltransferase UbiE of Escherichia fergusonii (strain ATCC 35469 / DSM 13698 / CCUG 18766 / IAM 14443 / JCM 21226 / LMG 7866 / NBRC 102419 / NCTC 12128 / CDC 0568-73).